A 118-amino-acid chain; its full sequence is Large ribosomal subunit protein bL19 (118 aa).

This sequence belongs to the bacterial ribosomal protein bL19 family.

This protein is located at the 30S-50S ribosomal subunit interface and may play a role in the structure and function of the aminoacyl-tRNA binding site. The polypeptide is Large ribosomal subunit protein bL19 (Dictyoglomus turgidum (strain DSM 6724 / Z-1310)).